The chain runs to 255 residues: Isoprenyl transferase (255 aa).

Asp35 is an active-site residue. Residue Asp35 participates in Mg(2+) binding. Substrate is bound by residues 36 to 39, Trp40, Arg48, His52, and 80 to 82; these read GNGR and STE. The active-site Proton acceptor is the Asn83. Substrate is bound by residues Trp84, Arg86, Arg203, and 209–211; that span reads RIS. Glu222 serves as a coordination point for Mg(2+).

The protein belongs to the UPP synthase family. In terms of assembly, homodimer. Mg(2+) is required as a cofactor.

Its function is as follows. Catalyzes the condensation of isopentenyl diphosphate (IPP) with allylic pyrophosphates generating different type of terpenoids. The chain is Isoprenyl transferase from Clostridium tetani (strain Massachusetts / E88).